A 248-amino-acid polypeptide reads, in one-letter code: Putative glutamine amidotransferase-like protein C13C5.04 (248 aa).

The 205-residue stretch at 13-217 (PMVEITSAYG…VKVLRGTEVF (205 aa)) folds into the Glutamine amidotransferase type-1 domain.

This chain is Putative glutamine amidotransferase-like protein C13C5.04, found in Schizosaccharomyces pombe (strain 972 / ATCC 24843) (Fission yeast).